The chain runs to 111 residues: MAAPVSGRRMAYRASLALTMYCCSTGERLRFAMAPSPSARLINATRLVSIFFPNLCIESMESFRRRANPAAFFDPSLALSMILCACGRLIGLMPSPAMGWFIFPVSSLPSV.

This is Putative protein p34 (34) from Acyrthosiphon pisum secondary endosymbiont phage 1 (Bacteriophage APSE-1).